Reading from the N-terminus, the 456-residue chain is Phosphomethylpyrimidine synthase (456 aa).

Residues Asn80, Met109, Tyr139, His175, 195-197 (SRG), 236-239 (DSLR), and Glu275 contribute to the substrate site. His279 provides a ligand contact to Zn(2+). Residue Tyr302 coordinates substrate. Zn(2+) is bound at residue His343. The [4Fe-4S] cluster site is built by Cys423, Cys426, and Cys431.

The protein belongs to the ThiC family. Requires [4Fe-4S] cluster as cofactor.

It catalyses the reaction 5-amino-1-(5-phospho-beta-D-ribosyl)imidazole + S-adenosyl-L-methionine = 4-amino-2-methyl-5-(phosphooxymethyl)pyrimidine + CO + 5'-deoxyadenosine + formate + L-methionine + 3 H(+). Its pathway is cofactor biosynthesis; thiamine diphosphate biosynthesis. Its function is as follows. Catalyzes the synthesis of the hydroxymethylpyrimidine phosphate (HMP-P) moiety of thiamine from aminoimidazole ribotide (AIR) in a radical S-adenosyl-L-methionine (SAM)-dependent reaction. The polypeptide is Phosphomethylpyrimidine synthase (Prochlorococcus marinus (strain MIT 9312)).